Reading from the N-terminus, the 369-residue chain is S-adenosylmethionine:tRNA ribosyltransferase-isomerase (369 aa).

This sequence belongs to the QueA family. As to quaternary structure, monomer.

The protein localises to the cytoplasm. It carries out the reaction 7-aminomethyl-7-carbaguanosine(34) in tRNA + S-adenosyl-L-methionine = epoxyqueuosine(34) in tRNA + adenine + L-methionine + 2 H(+). It participates in tRNA modification; tRNA-queuosine biosynthesis. Functionally, transfers and isomerizes the ribose moiety from AdoMet to the 7-aminomethyl group of 7-deazaguanine (preQ1-tRNA) to give epoxyqueuosine (oQ-tRNA). This Acaryochloris marina (strain MBIC 11017) protein is S-adenosylmethionine:tRNA ribosyltransferase-isomerase.